The sequence spans 259 residues: MQLWQKQLNLFFIAMGFFTRIPMPKWIEVDADKLNKASRYFGLVGLLVGAISAAVYSLMLYWVSPSVAIVFAMITSVLVTGGFHEDGLADTADGLGGGWTVEAKLNIMKDSRLGSYGALALVLALLLKWQLLTELALFDPSSVSLALIVGHCLSRVVAASFIFSEEYVSDTDTSKSKPLAQQQGINELSILLASGVLALLLVGLVPALVLITGLVIVRYGFIRLFRSQIGGYTGDTLGAAQQGSELSCYLLLLILGVSW.

The next 6 membrane-spanning stretches (helical) occupy residues 9 to 29 (NLFFIAMGFFTRIPMPKWIEV), 43 to 63 (LVGLLVGAISAAVYSLMLYWV), 64 to 84 (SPSVAIVFAMITSVLVTGGFH), 118 to 138 (ALALVLALLLKWQLLTELALF), 143 to 163 (VSLALIVGHCLSRVVAASFIF), and 196 to 216 (VLALLLVGLVPALVLITGLVI).

This sequence belongs to the CobS family. The cofactor is Mg(2+).

Its subcellular location is the cell inner membrane. It carries out the reaction alpha-ribazole + adenosylcob(III)inamide-GDP = adenosylcob(III)alamin + GMP + H(+). The catalysed reaction is alpha-ribazole 5'-phosphate + adenosylcob(III)inamide-GDP = adenosylcob(III)alamin 5'-phosphate + GMP + H(+). Its pathway is cofactor biosynthesis; adenosylcobalamin biosynthesis; adenosylcobalamin from cob(II)yrinate a,c-diamide: step 7/7. Functionally, joins adenosylcobinamide-GDP and alpha-ribazole to generate adenosylcobalamin (Ado-cobalamin). Also synthesizes adenosylcobalamin 5'-phosphate from adenosylcobinamide-GDP and alpha-ribazole 5'-phosphate. The sequence is that of Adenosylcobinamide-GDP ribazoletransferase from Shewanella halifaxensis (strain HAW-EB4).